We begin with the raw amino-acid sequence, 122 residues long: MSQASRALKAYRNALRATSVAFKNDVATLDAARNEIRTHMKSQEDPKGTNRSIDERLKLLDEVTVFLRHNIVQGRKVDEGKYRLNIHKDTELGDNDDIKKKKDGLSNGGFTGCCGGSGAKTT.

The transit peptide at 1 to 17 (MSQASRALKAYRNALRA) directs the protein to the mitochondrion. A compositionally biased stretch (basic and acidic residues) spans 92-104 (LGDNDDIKKKKDG). Residues 92-122 (LGDNDDIKKKKDGLSNGGFTGCCGGSGAKTT) are disordered. The segment covering 106-122 (SNGGFTGCCGGSGAKTT) has biased composition (gly residues).

The protein belongs to the complex I LYR family. MZM1 subfamily. Interacts with RIP1.

The protein resides in the mitochondrion matrix. Functionally, assembly factor required for Rieske Fe-S protein RIP1 incorporation into the cytochrome b-c1 (CIII) complex. Functions as a chaperone, binding to this subunit within the mitochondrial matrix and stabilizing it prior to its translocation and insertion into the late CIII dimeric intermediate within the mitochondrial inner membrane. Modulates the mitochondrial matrix zinc pool. This chain is Mitochondrial zinc maintenance protein 1, mitochondrial (MZM1), found in Komagataella phaffii (strain GS115 / ATCC 20864) (Yeast).